Reading from the N-terminus, the 213-residue chain is N-(5'-phosphoribosyl)anthranilate isomerase (213 aa).

The protein belongs to the TrpF family.

It carries out the reaction N-(5-phospho-beta-D-ribosyl)anthranilate = 1-(2-carboxyphenylamino)-1-deoxy-D-ribulose 5-phosphate. The protein operates within amino-acid biosynthesis; L-tryptophan biosynthesis; L-tryptophan from chorismate: step 3/5. This chain is N-(5'-phosphoribosyl)anthranilate isomerase, found in Caulobacter sp. (strain K31).